Consider the following 340-residue polypeptide: Probable dual-specificity RNA methyltransferase RlmN (340 aa).

Catalysis depends on E91, which acts as the Proton acceptor. Residues 97 to 326 (HSGRVTACIS…CEIRKEKGTD (230 aa)) form the Radical SAM core domain. C104 and C331 are joined by a disulfide. Residues C111, C115, and C118 each coordinate [4Fe-4S] cluster. Residues 158-159 (GE), S190, 213-215 (SLH), and N289 contribute to the S-adenosyl-L-methionine site. The active-site S-methylcysteine intermediate is the C331.

This sequence belongs to the radical SAM superfamily. RlmN family. The cofactor is [4Fe-4S] cluster.

Its subcellular location is the cytoplasm. It catalyses the reaction adenosine(2503) in 23S rRNA + 2 reduced [2Fe-2S]-[ferredoxin] + 2 S-adenosyl-L-methionine = 2-methyladenosine(2503) in 23S rRNA + 5'-deoxyadenosine + L-methionine + 2 oxidized [2Fe-2S]-[ferredoxin] + S-adenosyl-L-homocysteine. It carries out the reaction adenosine(37) in tRNA + 2 reduced [2Fe-2S]-[ferredoxin] + 2 S-adenosyl-L-methionine = 2-methyladenosine(37) in tRNA + 5'-deoxyadenosine + L-methionine + 2 oxidized [2Fe-2S]-[ferredoxin] + S-adenosyl-L-homocysteine. Functionally, specifically methylates position 2 of adenine 2503 in 23S rRNA and position 2 of adenine 37 in tRNAs. The polypeptide is Probable dual-specificity RNA methyltransferase RlmN (Thermosipho melanesiensis (strain DSM 12029 / CIP 104789 / BI429)).